The sequence spans 836 residues: MARKKKVEDEVKELEEFEELDVEESLSSSDKQSKPEKKISALEDLPGVGPATAEKLREAGYDTIEAIAVASPLELKEIAGISEGAALKIIQAAREAANIGTFMRADEYMKRRTTIGKISTGSKALDKLLGGGIETQAITEVFGEFGSGKCFAKDTKVYYENDTLVHFESIEDMYHKYASLGREVPFDNGYAVPLETVSVYTFDPKTGEVKRTKASYIYREKVEKLAEIRLSNGYLLRITLLHPVLVFRNGLQWVPAGMIKPGDLIVGIRSVPANAATIEESEAYFLGLFVAEGTSNPLSITTGSEELKDFIVSFIEDHDGYTPTVEVRRGLYRILFRKKTAEWLGELATSNASTKVVPERVLNAGESAIAAFLAGYLDGDGYLTESIVELVTKSRELADGLVFLLKRLGITPRISQKTIEGSVYYRIYITGEDRKTFEKVLEKSRIKPGEMNEGGVGRYPPALGKFLGKLYSEFRLPKRDNETAYHILTRSRNVWFTEKTLSRIEEYFREALEKLSEARKALEMGDKPELPFPWTAITKYGFTDRQVANYRTRGLPKRPELKEKVVSALLKEIERLEGVAKLALETIELARRLEFHEVSSVEVVDYNDWVYDLVIPETHNFIAPNGLVLHNTQLAHTLAVMVQKPPEEGGLGGSVIWIDTENTFRPERIKQIAENRGLDPEETLKNIYVARAFNSNHQMLLVEKAEEIIKEKAESDRPVKLLVVDSLMAHFRAEYVGRGTLAERQQKLAKHLADLHRLADLYDIAVFVTNQVQAKPDAFFGDPTRPVGGHILAHSATLRVYLRKGKAGKRVARLIDSPHLPEGEAVFRITEKGVED.

Over residues 15–24 the composition is skewed to acidic residues; that stretch reads EEFEELDVEE. The segment at 15 to 41 is disordered; that stretch reads EEFEELDVEESLSSSDKQSKPEKKISA. Over residues 31–41 the composition is skewed to basic and acidic residues; that stretch reads KQSKPEKKISA. Positions 285–410 constitute a DOD-type homing endonuclease domain; sequence FLGLFVAEGT…LVFLLKRLGI (126 aa).

Belongs to the eukaryotic RecA-like protein family. In terms of processing, this protein undergoes a protein self splicing that involves a post-translational excision of the intervening region (intein) followed by peptide ligation.

Functionally, involved in DNA repair and in homologous recombination. Binds and assemble on single-stranded DNA to form a nucleoprotein filament. Hydrolyzes ATP in a ssDNA-dependent manner and promotes DNA strand exchange between homologous DNA molecules. This Thermococcus kodakarensis (strain ATCC BAA-918 / JCM 12380 / KOD1) (Pyrococcus kodakaraensis (strain KOD1)) protein is DNA repair and recombination protein RadA (radA).